The primary structure comprises 149 residues: Arginine repressor (149 aa).

The protein belongs to the ArgR family.

The protein localises to the cytoplasm. It participates in amino-acid biosynthesis; L-arginine biosynthesis [regulation]. Its function is as follows. Regulates arginine biosynthesis genes. The polypeptide is Arginine repressor (Listeria innocua serovar 6a (strain ATCC BAA-680 / CLIP 11262)).